A 142-amino-acid chain; its full sequence is Secreted acidic protein 1B (142 aa).

Composition is skewed to acidic residues over residues 1 to 47 (SDDE…DDNE) and 54 to 64 (TNDDVDYGDGN). The tract at residues 1-74 (SDDESGDDEN…DEAREIGDHS (74 aa)) is disordered. At 1–123 (SDDESGDDEN…YLRSGGSHFK (123 aa)) the chain is on the extracellular side. Residues 65-74 (DEAREIGDHS) are compositionally biased toward basic and acidic residues. The helical transmembrane segment at 124 to 141 (GQLLNITLGLGFCILFLL) threads the bilayer. A topological domain (cytoplasmic) is located at residue L142.

As to expression, component of the acid-insoluble and acid-soluble organic matrix of the aragonitic skeleton (at protein level).

Its subcellular location is the membrane. The chain is Secreted acidic protein 1B from Acropora millepora (Staghorn coral).